The following is a 219-amino-acid chain: 2,5-diamino-6-ribosylamino-4(3H)-pyrimidinone 5'-phosphate reductase (219 aa).

NADP(+)-binding positions include Thr-52, Asp-56, 87–90 (SRCR), Val-134, and 156–159 (GGTL).

It belongs to the HTP reductase family. Homodimer.

It carries out the reaction 2,5-diamino-6-(1-D-ribitylamino)pyrimidin-4(3H)-one 5'-phosphate + NADP(+) = 2,5-diamino-6-(1-D-ribosylamino)pyrimidin-4(3H)-one 5'-phosphate + NADPH + H(+). The enzyme catalyses 2,5-diamino-6-(1-D-ribitylamino)pyrimidin-4(3H)-one 5'-phosphate + NAD(+) = 2,5-diamino-6-(1-D-ribosylamino)pyrimidin-4(3H)-one 5'-phosphate + NADH + H(+). Its pathway is cofactor biosynthesis; riboflavin biosynthesis. Its function is as follows. Catalyzes an early step in riboflavin biosynthesis, the NADPH-dependent reduction of the ribose side chain of 2,5-diamino-6-ribosylamino-4(3H)-pyrimidinone 5'-phosphate, yielding 2,5-diamino-6-ribitylamino-4(3H)-pyrimidinone 5'-phosphate. The sequence is that of 2,5-diamino-6-ribosylamino-4(3H)-pyrimidinone 5'-phosphate reductase from Archaeoglobus fulgidus (strain ATCC 49558 / DSM 4304 / JCM 9628 / NBRC 100126 / VC-16).